The following is a 138-amino-acid chain: Ribulose bisphosphate carboxylase small subunit (138 aa).

Belongs to the RuBisCO small chain family. In terms of assembly, heterohexadecamer of 8 large and 8 small subunits.

The protein resides in the plastid. It localises to the chloroplast. Functionally, ruBisCO catalyzes two reactions: the carboxylation of D-ribulose 1,5-bisphosphate, the primary event in carbon dioxide fixation, as well as the oxidative fragmentation of the pentose substrate in the photorespiration process. Both reactions occur simultaneously and in competition at the same active site. Although the small subunit is not catalytic it is essential for maximal activity. The sequence is that of Ribulose bisphosphate carboxylase small subunit from Cyanidium caldarium (Red alga).